The chain runs to 185 residues: Ribosome-recycling factor (185 aa).

The interval 163–185 is disordered; it reads LTNEATKKIDAISKDKEKEITEG. The segment covering 167–185 has biased composition (basic and acidic residues); sequence ATKKIDAISKDKEKEITEG.

This sequence belongs to the RRF family.

It is found in the cytoplasm. Responsible for the release of ribosomes from messenger RNA at the termination of protein biosynthesis. May increase the efficiency of translation by recycling ribosomes from one round of translation to another. In Latilactobacillus sakei subsp. sakei (strain 23K) (Lactobacillus sakei subsp. sakei), this protein is Ribosome-recycling factor.